The primary structure comprises 239 residues: Uridylate kinase (239 aa).

ATP is bound at residue 13 to 16; sequence KVSG. Gly55 contributes to the UMP binding site. 2 residues coordinate ATP: Gly56 and Arg60. UMP-binding positions include Asp75 and 136–143; that span reads TGNPFFTT. Residues Thr163, Gln164, Tyr169, and Asp172 each contribute to the ATP site.

The protein belongs to the UMP kinase family. In terms of assembly, homohexamer.

The protein localises to the cytoplasm. It carries out the reaction UMP + ATP = UDP + ADP. It participates in pyrimidine metabolism; CTP biosynthesis via de novo pathway; UDP from UMP (UMPK route): step 1/1. Inhibited by UTP. In terms of biological role, catalyzes the reversible phosphorylation of UMP to UDP. The polypeptide is Uridylate kinase (Bartonella bacilliformis (strain ATCC 35685 / KC583 / Herrer 020/F12,63)).